Here is a 660-residue protein sequence, read N- to C-terminus: DNA ligase (660 aa).

Residues 33 to 37 (DFVYD), 82 to 83 (SL), and glutamate 110 contribute to the NAD(+) site. Lysine 112 serves as the catalytic N6-AMP-lysine intermediate. NAD(+) contacts are provided by arginine 133, glutamate 167, lysine 281, and lysine 305. Cysteine 396, cysteine 399, cysteine 412, and cysteine 417 together coordinate Zn(2+). The BRCT domain maps to 583-660 (GENKLLAGKK…SFEDIKSYLD (78 aa)).

It belongs to the NAD-dependent DNA ligase family. LigA subfamily. Mg(2+) is required as a cofactor. The cofactor is Mn(2+).

It catalyses the reaction NAD(+) + (deoxyribonucleotide)n-3'-hydroxyl + 5'-phospho-(deoxyribonucleotide)m = (deoxyribonucleotide)n+m + AMP + beta-nicotinamide D-nucleotide.. Functionally, DNA ligase that catalyzes the formation of phosphodiester linkages between 5'-phosphoryl and 3'-hydroxyl groups in double-stranded DNA using NAD as a coenzyme and as the energy source for the reaction. It is essential for DNA replication and repair of damaged DNA. The sequence is that of DNA ligase from Borreliella burgdorferi (strain ATCC 35210 / DSM 4680 / CIP 102532 / B31) (Borrelia burgdorferi).